The following is a 302-amino-acid chain: Paired immunoglobulin-like type 2 receptor alpha (302 aa).

A signal peptide spans 1 to 31 (MALLISLPGGTPAMAQILLLLSSACLHAGNS). Residues 32 to 198 (ERSNRKNGFG…GGLDLQTTVG (167 aa)) are Extracellular-facing. 2 N-linked (GlcNAc...) asparagine glycosylation sites follow: Asn-90 and Asn-107. The helical transmembrane segment at 199-219 (LATAAAVFLVGVLGLIVFLWW) threads the bilayer. At 220-302 (KRRRQGQKTK…ETVYSIVKAK (83 aa)) the chain is on the cytoplasmic side. The span at 228 to 248 (TKAEIPAREPLETSEKHESVG) shows a compositional bias: basic and acidic residues. The tract at residues 228–293 (TKAEIPAREP…LPVHGNPQEE (66 aa)) is disordered. 2 short sequence motifs (ITIM motif) span residues 265-270 (IVYASI) and 294-299 (TVYSIV). Over residues 270-280 (ISLSSPTSPGT) the composition is skewed to polar residues.

Interacts with CD99. In terms of processing, phosphorylated on tyrosine residues.

The protein resides in the membrane. Functionally, paired receptors consist of highly related activating and inhibitory receptors and are widely involved in the regulation of the immune system. Receptor for CD99 and PIANP. This chain is Paired immunoglobulin-like type 2 receptor alpha (Pilra), found in Mus musculus (Mouse).